Here is a 276-residue protein sequence, read N- to C-terminus: C-type lectin domain family 12 member B (276 aa).

The Cytoplasmic portion of the chain corresponds to 1 to 43; it reads MSEEVTYATLTFQDSAGARNNRDGNNLRKRGHPAPSPIWRHAA. The ITIM motif signature appears at 5–10; sequence VTYATL. Tyrosine 7 is subject to Phosphotyrosine. Residues 44–64 form a helical; Signal-anchor for type II membrane protein membrane-spanning segment; it reads LGLVTLCLMLLIGLVTLGMMF. The Extracellular portion of the chain corresponds to 65–276; it reads LQISNDINSD…AAPVKTEDLD (212 aa). N-linked (GlcNAc...) asparagine glycans are attached at residues asparagine 91, asparagine 176, and asparagine 237. The region spanning 150–264 is the C-type lectin domain; it reads YQNSCYYFTT…CSAEIFWICE (115 aa). 2 cysteine pairs are disulfide-bonded: cysteine 172–cysteine 263 and cysteine 242–cysteine 255.

Homodimer. Interacts (via ITIM motif) with PTPN6. Interacts (via ITIM motif) with PTPN11; this interaction triggers dephosphorylation and activation of PTPN11. N-glycosylated. In terms of tissue distribution, detected in colon, heart, kidney, liver, lung, mammary gland, ovary, spleen and testis. Expressed in melanocytes (at protein level).

Its subcellular location is the cell membrane. Inhibitory receptor postulated to negatively regulate immune and non-immune functions. Upon phosphorylation, recruits SH2 domain-containing PTPN6 and PTPN11 phosphatases to its ITIM motif and antagonizes activation signals. Although it inhibits KLRK1/NKG2D-mediated signaling, it does not bind known ligands of KLRK1/NKG2D and therefore is not its inhibitory counterpart. May limit activation of myeloid cell subsets in response to infection or tissue inflammation. May protect target cells against natural killer cell-mediated lysis. May negatively regulate cell cycle and differentiation of melanocytes via inactivation of STAT3. This chain is C-type lectin domain family 12 member B, found in Homo sapiens (Human).